The sequence spans 445 residues: Argininosuccinate synthase (445 aa).

ATP contacts are provided by residues 17-25 (AFSGGLDTS) and Ala43. Tyr99 contacts L-citrulline. Residues Gly129 and Thr131 each contribute to the ATP site. Thr131, Asn135, and Asp136 together coordinate L-aspartate. Asn135 serves as a coordination point for L-citrulline. Asp136 serves as a coordination point for ATP. Arg139 and Ser192 together coordinate L-citrulline. Asp194 contacts ATP. L-citrulline-binding residues include Thr201, Glu203, and Glu280.

This sequence belongs to the argininosuccinate synthase family. Type 2 subfamily. As to quaternary structure, homotetramer.

It localises to the cytoplasm. The enzyme catalyses L-citrulline + L-aspartate + ATP = 2-(N(omega)-L-arginino)succinate + AMP + diphosphate + H(+). Its pathway is amino-acid biosynthesis; L-arginine biosynthesis; L-arginine from L-ornithine and carbamoyl phosphate: step 2/3. The polypeptide is Argininosuccinate synthase (Afipia carboxidovorans (strain ATCC 49405 / DSM 1227 / KCTC 32145 / OM5) (Oligotropha carboxidovorans)).